The sequence spans 351 residues: Photosystem II D2 protein (351 aa).

Residues 39–59 traverse the membrane as a helical segment; sequence TAYLAAGGWMTGTTFVTSWYT. Histidine 116 contributes to the chlorophyll a binding site. A helical transmembrane segment spans residues 123–139; sequence GFCLRQFEIARLVGIRP. Glutamine 128 and asparagine 141 together coordinate pheophytin a. Residues 151–164 traverse the membrane as a helical segment; sequence VFVSVFLLYPLGQA. Histidine 196 is a chlorophyll a binding site. Residues 206–226 traverse the membrane as a helical segment; the sequence is GALLCAIHGATVENTLFEDGD. A plastoquinone-binding residues include histidine 213 and phenylalanine 260. Histidine 213 serves as a coordination point for Fe cation. Histidine 267 serves as a coordination point for Fe cation. Residues 277-293 form a helical membrane-spanning segment; that stretch reads GLWTSAIGIVGLALNLR.

Belongs to the reaction center PufL/M/PsbA/D family. As to quaternary structure, PSII is composed of 1 copy each of membrane proteins PsbA, PsbB, PsbC, PsbD, PsbE, PsbF, PsbH, PsbI, PsbJ, PsbK, PsbL, PsbM, PsbT, PsbX, PsbY, PsbZ, Psb30/Ycf12, at least 3 peripheral proteins of the oxygen-evolving complex and a large number of cofactors. It forms dimeric complexes. The D1/D2 heterodimer binds P680, chlorophylls that are the primary electron donor of PSII, and subsequent electron acceptors. It shares a non-heme iron and each subunit binds pheophytin, quinone, additional chlorophylls, carotenoids and lipids. There is also a Cl(-1) ion associated with D1 and D2, which is required for oxygen evolution. The PSII complex binds additional chlorophylls, carotenoids and specific lipids. is required as a cofactor.

It is found in the plastid. It localises to the chloroplast thylakoid membrane. The catalysed reaction is 2 a plastoquinone + 4 hnu + 2 H2O = 2 a plastoquinol + O2. Photosystem II (PSII) is a light-driven water:plastoquinone oxidoreductase that uses light energy to abstract electrons from H(2)O, generating O(2) and a proton gradient subsequently used for ATP formation. It consists of a core antenna complex that captures photons, and an electron transfer chain that converts photonic excitation into a charge separation. The D1/D2 (PsbA/PsbD) reaction center heterodimer binds P680, the primary electron donor of PSII as well as several subsequent electron acceptors. D2 is needed for assembly of a stable PSII complex. This is Photosystem II D2 protein from Trieres chinensis (Marine centric diatom).